The primary structure comprises 222 residues: UPF0128 protein TK2294 (222 aa).

The protein belongs to the UPF0128 family.

The polypeptide is UPF0128 protein TK2294 (Thermococcus kodakarensis (strain ATCC BAA-918 / JCM 12380 / KOD1) (Pyrococcus kodakaraensis (strain KOD1))).